Consider the following 152-residue polypeptide: Large ribosomal subunit protein bL9 (152 aa).

Belongs to the bacterial ribosomal protein bL9 family.

Functionally, binds to the 23S rRNA. This chain is Large ribosomal subunit protein bL9, found in Streptococcus thermophilus (strain CNRZ 1066).